Reading from the N-terminus, the 281-residue chain is Pantothenate synthetase (281 aa).

29-36 lines the ATP pocket; it reads MGYLHEGH. The active-site Proton donor is the His-36. Gln-60 provides a ligand contact to (R)-pantoate. Gln-60 contributes to the beta-alanine binding site. An ATP-binding site is contributed by 146-149; sequence GQKD. Gln-152 is a (R)-pantoate binding site. ATP-binding positions include Val-175 and 183 to 186; that span reads MSSR.

Belongs to the pantothenate synthetase family. Homodimer.

It is found in the cytoplasm. It catalyses the reaction (R)-pantoate + beta-alanine + ATP = (R)-pantothenate + AMP + diphosphate + H(+). It participates in cofactor biosynthesis; (R)-pantothenate biosynthesis; (R)-pantothenate from (R)-pantoate and beta-alanine: step 1/1. In terms of biological role, catalyzes the condensation of pantoate with beta-alanine in an ATP-dependent reaction via a pantoyl-adenylate intermediate. In Pseudothermotoga lettingae (strain ATCC BAA-301 / DSM 14385 / NBRC 107922 / TMO) (Thermotoga lettingae), this protein is Pantothenate synthetase.